The primary structure comprises 286 residues: Polyamine aminopropyltransferase (286 aa).

The PABS domain maps to 5 to 238 (TMWHETLHDQ…GIMTFAWATD (234 aa)). Gln-33 contacts S-methyl-5'-thioadenosine. The spermidine site is built by His-64 and Asp-88. S-methyl-5'-thioadenosine-binding positions include Glu-108 and 140 to 141 (DG). The active-site Proton acceptor is Asp-158. A spermidine-binding site is contributed by 158–161 (DCTD). Pro-165 is an S-methyl-5'-thioadenosine binding site.

Belongs to the spermidine/spermine synthase family. Homodimer or homotetramer.

The protein resides in the cytoplasm. The enzyme catalyses S-adenosyl 3-(methylsulfanyl)propylamine + putrescine = S-methyl-5'-thioadenosine + spermidine + H(+). The protein operates within amine and polyamine biosynthesis; spermidine biosynthesis; spermidine from putrescine: step 1/1. Its function is as follows. Catalyzes the irreversible transfer of a propylamine group from the amino donor S-adenosylmethioninamine (decarboxy-AdoMet) to putrescine (1,4-diaminobutane) to yield spermidine. The protein is Polyamine aminopropyltransferase of Salmonella paratyphi A (strain ATCC 9150 / SARB42).